We begin with the raw amino-acid sequence, 475 residues long: BTB/POZ domain-containing protein 10 (475 aa).

Residues 1–143 (MAGRPHPYDG…SSQSSSDGSC (143 aa)) form a disordered region. The segment covering 22–31 (LHSRPRKLYK) has biased composition (basic residues). The segment covering 57–80 (GHERSRDRRRSSDRSRDSSHERTE) has biased composition (basic and acidic residues). Over residues 81 to 94 (SQLTPCIRNVTSPT) the composition is skewed to polar residues. The span at 97-107 (HHVEREKDHSS) shows a compositional bias: basic and acidic residues. Over residues 108–142 (SRPSSPRPQKASPNGSISSAGNSSRNSSQSSSDGS) the composition is skewed to low complexity. Residues 146–475 (AGEMVFVYEN…LDPDAQNPTL (330 aa)) form an interaction with AKT family members region. In terms of domain architecture, BTB spans 167–241 (ERVTLIVDNT…YKTGIIRCPD (75 aa)). A disordered region spans residues 456-475 (PIHPPSGNSDLDPDAQNPTL).

As to quaternary structure, interacts (via C-terminal 330-amino-acid region) with AKT1; AKT2 and AKT3. Interacts with PPP2CA and PPP1CA.

It is found in the nucleus. It localises to the cytoplasm. Plays a major role as an activator of AKT family members by inhibiting PPP2CA-mediated dephosphorylation, thereby keeping AKTs activated. Plays a role in preventing motor neuronal death and in accelerating the growth of pancreatic beta cells. The sequence is that of BTB/POZ domain-containing protein 10 (BTBD10) from Pongo abelii (Sumatran orangutan).